The primary structure comprises 204 residues: Putative AgrB-like protein (204 aa).

Helical transmembrane passes span 52–74 (YGIALVTGLLLQTVTVHLSYLWL), 87–107 (LNCTLISLMMFVLAPFVFQNI), 111–131 (NWIVLGTFGFILLNMFLFAPA), and 156–176 (LILTGIALLIPFAEMKTLIMV).

This sequence belongs to the AgrB family.

It localises to the cell membrane. In terms of biological role, may be involved in the proteolytic processing of a quorum sensing system signal molecule precursor. This Listeria monocytogenes serotype 4b (strain CLIP80459) protein is Putative AgrB-like protein.